Here is a 279-residue protein sequence, read N- to C-terminus: Glycerol uptake facilitator protein (279 aa).

Over 1–8 (MTTAAPTP) the chain is Cytoplasmic. The chain crosses the membrane as a helical span at residues 9–37 (SLFGQCLAEFLGTALLIFFGTGCVAALKV). The Periplasmic segment spans residues 38-42 (AGASF). The helical transmembrane segment at 43-63 (GLWEISIIWGVGVSMAIYLSA) threads the bilayer. Over 64-66 (GVS) the chain is Cytoplasmic. Residues 67–70 (GAHL) lie within the membrane without spanning it. Positions 71–73 (NPA) match the NPA 1 motif. The segment at residues 71-81 (NPAVSIALWLF) is an intramembrane region (helical). Residues 82 to 87 (AGFEGR) are Cytoplasmic-facing. The chain crosses the membrane as a helical span at residues 88 to 111 (KLPFYITAQVAGAFCAAALVYTLY). The Periplasmic portion of the chain corresponds to 112 to 146 (SSLFIEFEQAQNIVRGSQDSLALASVFSTYPHPAL). Residues 147–172 (SVGQAFLVEVVITAILMAVIMALTDD) traverse the membrane as a helical segment. At 173–180 (GNGLPRGP) the chain is on the cytoplasmic side. A helical membrane pass occupies residues 181-197 (LAPLLIGLLIAVIGSAM). Residues 198-201 (GPLT) lie on the Periplasmic side of the membrane. The stretch at 202–205 (GFAM) is an intramembrane region. Positions 206–208 (NPA) match the NPA 2 motif. The segment at residues 206 to 219 (NPARDFGPKLMTYL) is an intramembrane region (helical). Topologically, residues 220-234 (AGWGPIAFTGGREIP) are periplasmic. A helical transmembrane segment spans residues 235-257 (YFLVPIFAPILGACLGAGGYRVL). At 258-279 (IARHLPSAAAPAEAEPEKVRAS) the chain is on the cytoplasmic side.

This sequence belongs to the MIP/aquaporin (TC 1.A.8) family.

It is found in the cell inner membrane. It carries out the reaction glycerol(in) = glycerol(out). Its function is as follows. Mediates glycerol diffusion across the cytoplasmic membrane via a pore-type mechanism. The protein is Glycerol uptake facilitator protein (glpF) of Pseudomonas aeruginosa (strain ATCC 15692 / DSM 22644 / CIP 104116 / JCM 14847 / LMG 12228 / 1C / PRS 101 / PAO1).